The following is a 312-amino-acid chain: tRNA uridine(34) hydroxylase (312 aa).

The 91-residue stretch at 147-237 (SDRNVIFIDM…GILGYVHDAN (91 aa)) folds into the Rhodanese domain. C201 functions as the Cysteine persulfide intermediate in the catalytic mechanism.

Belongs to the TrhO family.

The enzyme catalyses uridine(34) in tRNA + AH2 + O2 = 5-hydroxyuridine(34) in tRNA + A + H2O. In terms of biological role, catalyzes oxygen-dependent 5-hydroxyuridine (ho5U) modification at position 34 in tRNAs. This is tRNA uridine(34) hydroxylase from Buchnera aphidicola subsp. Schizaphis graminum (strain Sg).